The following is a 312-amino-acid chain: Methionyl-tRNA formyltransferase (312 aa).

Residue 109 to 112 coordinates (6S)-5,6,7,8-tetrahydrofolate; that stretch reads SLLP.

Belongs to the Fmt family.

The catalysed reaction is L-methionyl-tRNA(fMet) + (6R)-10-formyltetrahydrofolate = N-formyl-L-methionyl-tRNA(fMet) + (6S)-5,6,7,8-tetrahydrofolate + H(+). Attaches a formyl group to the free amino group of methionyl-tRNA(fMet). The formyl group appears to play a dual role in the initiator identity of N-formylmethionyl-tRNA by promoting its recognition by IF2 and preventing the misappropriation of this tRNA by the elongation apparatus. This chain is Methionyl-tRNA formyltransferase, found in Listeria monocytogenes serotype 4a (strain HCC23).